The chain runs to 241 residues: Nicotinamide riboside kinase (241 aa).

21 to 29 lines the ATP pocket; it reads GCSSSGKST. Mg(2+)-binding residues include Ser-28 and Asp-47. Catalysis depends on Asp-47, which acts as the Proton acceptor. Residues 47 to 50, 67 to 68, and Asp-68 contribute to the substrate site; these read DDFY and WD. ATP is bound at residue Arg-163. Arg-164 contributes to the substrate binding site. ATP contacts are provided by residues Arg-167, 167–169, and 213–215; these read RGG and DVQ. A substrate-binding site is contributed by 169–170; the sequence is GY.

The protein belongs to the uridine kinase family. NRK subfamily.

It catalyses the reaction beta-nicotinamide D-riboside + ATP = beta-nicotinamide D-ribonucleotide + ADP + H(+). The enzyme catalyses beta-D-ribosylnicotinate + ATP = nicotinate beta-D-ribonucleotide + ADP + H(+). It participates in cofactor biosynthesis; NAD(+) biosynthesis. In terms of biological role, catalyzes the phosphorylation of nicotinamide riboside (NR) and nicotinic acid riboside (NaR) to form nicotinamide mononucleotide (NMN) and nicotinic acid mononucleotide (NaMN). The protein is Nicotinamide riboside kinase (NRK1) of Eremothecium gossypii (strain ATCC 10895 / CBS 109.51 / FGSC 9923 / NRRL Y-1056) (Yeast).